The primary structure comprises 441 residues: Enolase (441 aa).

Q164 lines the (2R)-2-phosphoglycerate pocket. E206 functions as the Proton donor in the catalytic mechanism. Positions 243, 289, and 316 each coordinate Mg(2+). The (2R)-2-phosphoglycerate site is built by K341, R370, S371, and K392. K341 (proton acceptor) is an active-site residue.

Belongs to the enolase family. It depends on Mg(2+) as a cofactor.

It is found in the cytoplasm. The protein localises to the secreted. It localises to the cell surface. The catalysed reaction is (2R)-2-phosphoglycerate = phosphoenolpyruvate + H2O. It participates in carbohydrate degradation; glycolysis; pyruvate from D-glyceraldehyde 3-phosphate: step 4/5. In terms of biological role, catalyzes the reversible conversion of 2-phosphoglycerate (2-PG) into phosphoenolpyruvate (PEP). It is essential for the degradation of carbohydrates via glycolysis. The sequence is that of Enolase from Leuconostoc mesenteroides subsp. mesenteroides (strain ATCC 8293 / DSM 20343 / BCRC 11652 / CCM 1803 / JCM 6124 / NCDO 523 / NBRC 100496 / NCIMB 8023 / NCTC 12954 / NRRL B-1118 / 37Y).